Consider the following 82-residue polypeptide: NAD(P)H-quinone oxidoreductase subunit O, organellar chromatophore (82 aa).

This sequence belongs to the complex I NdhO subunit family. As to quaternary structure, NDH-1 can be composed of about 15 different subunits; different subcomplexes with different compositions have been identified which probably have different functions.

It is found in the plastid. Its subcellular location is the organellar chromatophore thylakoid membrane. The catalysed reaction is a plastoquinone + NADH + (n+1) H(+)(in) = a plastoquinol + NAD(+) + n H(+)(out). The enzyme catalyses a plastoquinone + NADPH + (n+1) H(+)(in) = a plastoquinol + NADP(+) + n H(+)(out). Its function is as follows. NDH-1 shuttles electrons from an unknown electron donor, via FMN and iron-sulfur (Fe-S) centers, to quinones in the respiratory and/or the photosynthetic chain. The immediate electron acceptor for the enzyme in this species is believed to be plastoquinone. Couples the redox reaction to proton translocation, and thus conserves the redox energy in a proton gradient. Cyanobacterial NDH-1 also plays a role in inorganic carbon-concentration. The sequence is that of NAD(P)H-quinone oxidoreductase subunit O, organellar chromatophore from Paulinella chromatophora.